A 166-amino-acid chain; its full sequence is Transcriptional repressor NrdR (166 aa).

A zinc finger lies at 3–34 (CPHCHHNGSRVVDSRPTDDGRVIRRRRECESC). In terms of domain architecture, ATP-cone spans 49–139 (LLVIKKNGTR…VYRQFKDTGV (91 aa)).

The protein belongs to the NrdR family. Zn(2+) is required as a cofactor.

In terms of biological role, negatively regulates transcription of bacterial ribonucleotide reductase nrd genes and operons by binding to NrdR-boxes. The chain is Transcriptional repressor NrdR from Levilactobacillus brevis (strain ATCC 367 / BCRC 12310 / CIP 105137 / JCM 1170 / LMG 11437 / NCIMB 947 / NCTC 947) (Lactobacillus brevis).